The chain runs to 247 residues: Carboxy-S-adenosyl-L-methionine synthase (247 aa).

S-adenosyl-L-methionine is bound by residues Tyr39, 89 to 90 (DN), 117 to 118 (DI), Asn132, and Arg199.

Belongs to the class I-like SAM-binding methyltransferase superfamily. Cx-SAM synthase family. In terms of assembly, homodimer.

The enzyme catalyses prephenate + S-adenosyl-L-methionine = carboxy-S-adenosyl-L-methionine + 3-phenylpyruvate + H2O. In terms of biological role, catalyzes the conversion of S-adenosyl-L-methionine (SAM) to carboxy-S-adenosyl-L-methionine (Cx-SAM). This Sodalis glossinidius (strain morsitans) protein is Carboxy-S-adenosyl-L-methionine synthase.